The primary structure comprises 280 residues: Cyanocobalamin reductase / alkylcobalamin dealkylase (280 aa).

Substrate is bound by residues Asp-104, 115–118, 129–131, Cys-149, and Ile-160; these read ILAQ and YYQ. Phosphoserine is present on residues Ser-245, Ser-247, Ser-273, and Ser-277. The segment at 256-280 is disordered; sequence LSKKPQNPRRGWLSPTVSPPISPGP.

The protein belongs to the MMACHC family. In terms of assembly, monomer in the absence of bound substrate. Homodimer; dimerization is triggered by binding to FMN or adenosylcobalamin. Interacts with LMBRD1 and ABCD4; the interaction ensures the transport of cobalamin from the lysosome to the cytoplasm. Forms a multiprotein complex with MMADHC, MTR and MTRR; the interaction with MTR could modulate MMACHC-dependent processing of cobalamin. Heterodimer with MMADHC; the interaction might play a role in the regulation of the balance between AdoCbl and MeCbl synthesis. Requires FAD as cofactor. FMN serves as cofactor.

It is found in the cytoplasm. The protein resides in the cytosol. It catalyses the reaction 2 cob(II)alamin-[cyanocobalamin reductase] + 2 hydrogen cyanide + NADP(+) = 2 cyanocob(III)alamin + 2 apo-[cyanocobalamin reductase] + NADPH + H(+). The catalysed reaction is apo-[alkylcobalamin reductase] + an R-cob(III)alamin + glutathione = cob(I)alamin-[alkylcobalamin reductase] + an S-substituted glutathione + H(+). The enzyme catalyses apo-[alkylcobalamin reductase] + methylcob(III)alamin + glutathione = S-methyl glutathione + cob(I)alamin-[alkylcobalamin reductase] + H(+). It carries out the reaction apo-[alkylcobalamin reductase] + adenosylcob(III)alamin + glutathione = S-adenosylglutathione + cob(I)alamin-[alkylcobalamin reductase] + H(+). Functionally, cobalamin (vitamin B12) cytosolic chaperone that catalyzes the reductive decyanation of cyanocob(III)alamin (cyanocobalamin, CNCbl) to yield cob(II)alamin and cyanide, using FAD or FMN as cofactors and NADPH as cosubstrate. Cyanocobalamin constitutes the inactive form of vitamin B12 introduced from the diet, and is converted into the active cofactors methylcobalamin (MeCbl) involved in methionine biosynthesis, and 5'-deoxyadenosylcobalamin (AdoCbl) involved in the TCA cycle. Forms a complex with the lysosomal transporter ABCD4 and its chaperone LMBRD1, to transport cobalamin across the lysosomal membrane into the cytosol. The processing of cobalamin in the cytosol occurs in a multiprotein complex composed of at least MMACHC, MMADHC, MTRR (methionine synthase reductase) and MTR (methionine synthase) which may contribute to shuttle safely and efficiently cobalamin towards MTR in order to produce methionine. Also acts as a glutathione transferase by catalyzing the dealkylation of the alkylcob(III)alamins MeCbl and AdoCbl, using the thiolate of glutathione for nucleophilic displacement to generate cob(I)alamin and the corresponding glutathione thioether. The conversion of incoming MeCbl or AdoCbl into a common intermediate cob(I)alamin is necessary to meet the cellular needs for both cofactors. Cysteine and homocysteine cannot substitute for glutathione in this reaction. This chain is Cyanocobalamin reductase / alkylcobalamin dealkylase (MMACHC), found in Bos taurus (Bovine).